Reading from the N-terminus, the 366-residue chain is MKRPATRTFGILTSGGDCPGLNAAIRGVTKAAYWRYGMSIIGISHGYRGLIEGDARLLHPRDFDGILTRGGTILGTSREKPFKPDPGEKDSEAGSRKVEAIIENYHKLHLDCLVVLGGNGTHKTAYLLQQAGLNVIGLPKTIDNDIWGTDVTFGFHSAVDIATEAIDRLHSTAHAHNRVMVIEVMGHKAGWLALYAGIAGGGDIILIPEIPYDLAHIVHHLQTRQQRGKEFSIVVVAEGALSREESLMSKEERKKRRKKNRFPTKGYEVAHLIQEATGMETRVTVLGYLQRGGTPSPYDRLLATRFGTAAAELLYRGDYGKMVALRDGEVVAIPLGEVAEKLKTVPPDHPLIDTARAVGTCFGDGV.

Residues glycine 16, 78–79 (RE), and 118–121 (GNGT) contribute to the ATP site. Positions 74-94 (LGTSREKPFKPDPGEKDSEAG) are disordered. The span at 77–94 (SREKPFKPDPGEKDSEAG) shows a compositional bias: basic and acidic residues. Asparagine 119 contacts Mg(2+). Substrate is bound by residues 141 to 143 (TID), arginine 178, 185 to 187 (MGH), glutamate 238, arginine 282, and 288 to 291 (YLQR). Aspartate 143 functions as the Proton acceptor in the catalytic mechanism.

This sequence belongs to the phosphofructokinase type A (PFKA) family. Mixed-substrate PFK group III subfamily. As to quaternary structure, homodimer or homotetramer. Mg(2+) serves as cofactor.

The protein localises to the cytoplasm. It carries out the reaction beta-D-fructose 6-phosphate + ATP = beta-D-fructose 1,6-bisphosphate + ADP + H(+). It participates in carbohydrate degradation; glycolysis; D-glyceraldehyde 3-phosphate and glycerone phosphate from D-glucose: step 3/4. Its function is as follows. Catalyzes the phosphorylation of D-fructose 6-phosphate to fructose 1,6-bisphosphate by ATP, the first committing step of glycolysis. This Spirochaeta thermophila (strain ATCC 49972 / DSM 6192 / RI 19.B1) protein is ATP-dependent 6-phosphofructokinase.